We begin with the raw amino-acid sequence, 91 residues long: Small ribosomal subunit protein uS19 (91 aa).

Belongs to the universal ribosomal protein uS19 family.

Its function is as follows. Protein S19 forms a complex with S13 that binds strongly to the 16S ribosomal RNA. The polypeptide is Small ribosomal subunit protein uS19 (Colwellia psychrerythraea (strain 34H / ATCC BAA-681) (Vibrio psychroerythus)).